Consider the following 460-residue polypeptide: Acetyl-CoA decarbonylase/synthase complex subunit beta (460 aa).

Cys-188, Cys-191, Cys-277, and Cys-279 together coordinate [Ni-Fe-S] cluster. Residues Glu-402 to Pro-416 show a composition bias toward acidic residues. Residues Glu-402 to Pro-422 are disordered.

Belongs to the CdhC family. In terms of assembly, monomer. The ACDS complex is made up of alpha, epsilon, beta, gamma and delta chains with a probable stoichiometry of (alpha(2)epsilon(2))(4)-beta(8)-(gamma(1)delta(1))(8). The cofactor is [Ni-Fe-S] cluster.

It carries out the reaction Co(I)-[corrinoid Fe-S protein] + acetyl-CoA + H(+) = methyl-Co(III)-[corrinoid Fe-S protein] + CO + CoA. Its function is as follows. Part of a complex that catalyzes the reversible cleavage of acetyl-CoA, allowing autotrophic growth from CO(2). The alpha-epsilon complex generates CO from CO(2), while the beta subunit (this protein) combines the CO with CoA and a methyl group to form acetyl-CoA. The methyl group, which is incorporated into acetyl-CoA, is transferred to the beta subunit by a corrinoid iron-sulfur protein (the gamma-delta complex). The chain is Acetyl-CoA decarbonylase/synthase complex subunit beta from Methanothermobacter thermautotrophicus (strain ATCC 29096 / DSM 1053 / JCM 10044 / NBRC 100330 / Delta H) (Methanobacterium thermoautotrophicum).